The chain runs to 426 residues: Inositol hexakisphosphate kinase 2 (426 aa).

ATP contacts are provided by residues glutamate 207 to leucine 209 and aspartate 220. Residues lysine 222 and lysine 236–lysine 243 each bind substrate. Residue aspartate 383 coordinates ATP. A substrate-binding site is contributed by histidine 386.

The protein belongs to the inositol phosphokinase (IPK) family.

It localises to the nucleus. It carries out the reaction 1D-myo-inositol hexakisphosphate + ATP = 5-diphospho-1D-myo-inositol 1,2,3,4,6-pentakisphosphate + ADP. It participates in phospholipid metabolism; phosphatidylinositol metabolism. Its activity is regulated as follows. Inhibited by flavonoids, including myricetin, quercetin, luteolin, isorhamnetin, rhamnetin, kaempferol, diosmetin and apigenin. Its function is as follows. Converts inositol hexakisphosphate (InsP6) to diphosphoinositol pentakisphosphate (InsP7/PP-InsP5). This chain is Inositol hexakisphosphate kinase 2, found in Homo sapiens (Human).